We begin with the raw amino-acid sequence, 77 residues long: Teretoxin Tan15.2 (77 aa).

An N-terminal signal peptide occupies residues 1 to 21 (MTRLTVVFLAILVLLPLATSN). The propeptide occupies 22 to 40 (SGADEAPASLSDLLHRTKR).

Post-translationally, contains 4 disulfide bonds. In terms of tissue distribution, expressed by the venom duct.

The protein localises to the secreted. The polypeptide is Teretoxin Tan15.2 (Terebra anilis (Auger snail)).